Here is a 221-residue protein sequence, read N- to C-terminus: Urease accessory protein UreF (221 aa).

This sequence belongs to the UreF family. In terms of assembly, ureD, UreF and UreG form a complex that acts as a GTP-hydrolysis-dependent molecular chaperone, activating the urease apoprotein by helping to assemble the nickel containing metallocenter of UreC. The UreE protein probably delivers the nickel.

The protein localises to the cytoplasm. Functionally, required for maturation of urease via the functional incorporation of the urease nickel metallocenter. The protein is Urease accessory protein UreF of Aliivibrio fischeri (strain MJ11) (Vibrio fischeri).